Consider the following 189-residue polypeptide: Interferon alpha-6 (189 aa).

A signal peptide spans 1–23 (MARLCAFLMVLAVLSYWPTCSLG). 2 cysteine pairs are disulfide-bonded: cysteine 24–cysteine 122 and cysteine 52–cysteine 162. A glycan (N-linked (GlcNAc...) asparagine) is linked at asparagine 101.

The protein belongs to the alpha/beta interferon family.

It is found in the secreted. Produced by macrophages, IFN-alpha have antiviral activities. Interferon stimulates the production of two enzymes: a protein kinase and an oligoadenylate synthetase. This chain is Interferon alpha-6 (Ifna6), found in Mus musculus (Mouse).